Reading from the N-terminus, the 347-residue chain is uncharacterized protein (347 aa).

This is an uncharacterized protein from Sinorhizobium fredii (strain NBRC 101917 / NGR234).